We begin with the raw amino-acid sequence, 438 residues long: UDP-N-acetylmuramoylalanine--D-glutamate ligase (438 aa).

112-118 is a binding site for ATP; it reads GSNGKST.

This sequence belongs to the MurCDEF family.

It is found in the cytoplasm. The catalysed reaction is UDP-N-acetyl-alpha-D-muramoyl-L-alanine + D-glutamate + ATP = UDP-N-acetyl-alpha-D-muramoyl-L-alanyl-D-glutamate + ADP + phosphate + H(+). It functions in the pathway cell wall biogenesis; peptidoglycan biosynthesis. Its function is as follows. Cell wall formation. Catalyzes the addition of glutamate to the nucleotide precursor UDP-N-acetylmuramoyl-L-alanine (UMA). The protein is UDP-N-acetylmuramoylalanine--D-glutamate ligase of Pectobacterium atrosepticum (strain SCRI 1043 / ATCC BAA-672) (Erwinia carotovora subsp. atroseptica).